Reading from the N-terminus, the 2779-residue chain is Protein lava lamp (2779 aa).

Disordered regions lie at residues L31 to K62, A79 to S98, and K110 to L135. Positions G33–G51 are enriched in polar residues. 2 positions are modified to phosphoserine: S34 and S35. Residues T52–D85 are a coiled coil. A compositionally biased stretch (basic and acidic residues) spans A79–S91. S95, S98, S122, and S133 each carry phosphoserine. Residues E141–I175 are a coiled coil. Phosphoserine occurs at positions 186, 352, and 354. 2 coiled-coil regions span residues E220–I607 and G659–I716. Basic and acidic residues predominate over residues E337–S352. Disordered regions lie at residues E337–V366, R622–L662, R711–S730, and Q1716–A1753. Composition is skewed to low complexity over residues S717–S730 and Q1716–Q1740. Coiled-coil stretches lie at residues L751 to H1733, T1785 to Q1863, and N1941 to N2433. Disordered regions lie at residues E2348 to V2367, E2484 to S2507, N2552 to E2578, and T2633 to N2665. Positions Q2488–Q2502 are enriched in low complexity. A coiled-coil region spans residues E2504–Q2544. A coiled-coil region spans residues D2600–E2641. Positions S2643–N2665 are enriched in low complexity.

As to quaternary structure, interacts with CLIP-190 and spectrin separately.

Its subcellular location is the golgi apparatus. It localises to the cytoplasmic vesicle. The protein resides in the autophagosome. Functionally, lva and spectrin may form a Golgi-based scaffold that mediates interaction of Golgi bodies with microtubules and facilitates Golgi-derived membrane secretion required for the formation of furrows during cellularization. Under starvation conditions recruited by ema to developing autophagsosomes where it may function in autophagosome growth. This is Protein lava lamp (lva) from Drosophila melanogaster (Fruit fly).